The chain runs to 360 residues: Aminomethyltransferase (360 aa).

Belongs to the GcvT family. The glycine cleavage system is composed of four proteins: P, T, L and H.

The catalysed reaction is N(6)-[(R)-S(8)-aminomethyldihydrolipoyl]-L-lysyl-[protein] + (6S)-5,6,7,8-tetrahydrofolate = N(6)-[(R)-dihydrolipoyl]-L-lysyl-[protein] + (6R)-5,10-methylene-5,6,7,8-tetrahydrofolate + NH4(+). The glycine cleavage system catalyzes the degradation of glycine. This chain is Aminomethyltransferase, found in Exiguobacterium sibiricum (strain DSM 17290 / CCUG 55495 / CIP 109462 / JCM 13490 / 255-15).